The following is a 160-amino-acid chain: Cyanate hydratase (160 aa).

Residues R100, E103, and S126 contribute to the active site.

The protein belongs to the cyanase family.

The enzyme catalyses cyanate + hydrogencarbonate + 3 H(+) = NH4(+) + 2 CO2. Catalyzes the reaction of cyanate with bicarbonate to produce ammonia and carbon dioxide. This chain is Cyanate hydratase, found in Aspergillus flavus (strain ATCC 200026 / FGSC A1120 / IAM 13836 / NRRL 3357 / JCM 12722 / SRRC 167).